Reading from the N-terminus, the 601-residue chain is Glutathione-regulated potassium-efflux system protein KefB (601 aa).

Helical transmembrane passes span 4–24 (ADLLTAGVLFLFAAVAAVPLA), 29–49 (IGAVLGYLLAGIAIGPWGLGF), 55–75 (EILHFSELGVVFLMFIIGLEL), 87–107 (IFGVGAAQVLLSAAVLAGLLM), 111–131 (FLWQAAVVGGIGLAMSSTAMA), 152–172 (VLLFQDLAVIPALALVPLLAG), 177–197 (HFDWFKVAMKVLAFAVMLIGG), 207–227 (FIAASGVREVFTAATLLLVLS), 230–250 (LFMDALGLSMALGTFIAGVLL), 262–282 (AIDPFKGLLLGLFFISVGMSL), 284–304 (LGVLYTHLLWVAASVVILVAI), 324–344 (MQFASVLSQGGEFAFVLFSTA), and 356–376 (ALLLVTVTLSMMTTPLLMKGI). The RCK N-terminal domain occupies 400 to 519 (KPQVIVVGFG…AGVTQFSRET (120 aa)).

Belongs to the monovalent cation:proton antiporter 2 (CPA2) transporter (TC 2.A.37) family. KefB subfamily. Interacts with the regulatory subunit KefG.

It localises to the cell inner membrane. Functionally, pore-forming subunit of a potassium efflux system that confers protection against electrophiles. Catalyzes K(+)/H(+) antiport. This chain is Glutathione-regulated potassium-efflux system protein KefB, found in Salmonella schwarzengrund (strain CVM19633).